Here is a 616-residue protein sequence, read N- to C-terminus: UvrABC system protein C (616 aa).

One can recognise a GIY-YIG domain in the interval 11–85 (ASPGVYIFRR…IKQHRPHYNV (75 aa)). The UVR domain occupies 194–229 (APVIARLKADMQAAARAQDFEQAARLRDRVQAVEKL).

It belongs to the UvrC family. In terms of assembly, interacts with UvrB in an incision complex.

Its subcellular location is the cytoplasm. The UvrABC repair system catalyzes the recognition and processing of DNA lesions. UvrC both incises the 5' and 3' sides of the lesion. The N-terminal half is responsible for the 3' incision and the C-terminal half is responsible for the 5' incision. This chain is UvrABC system protein C, found in Deinococcus geothermalis (strain DSM 11300 / CIP 105573 / AG-3a).